The primary structure comprises 636 residues: DNA-dependent metalloprotease SPRTN (636 aa).

Positions 19–42 (QETPAAGWPDEDCPSSKRRRVDPS) are disordered. Residues 76–183 (RAMFLQFNDK…ASGTNITIYH (108 aa)) enclose the SprT-like domain. Zn(2+) is bound at residue His-141. Glu-142 is an active-site residue. Positions 145 and 160 each coordinate Zn(2+). 2 disordered regions span residues 238-382 (TYTK…GKQR) and 398-430 (RGASAVGSSKSSTDASTADYRSNSALDAKPSGK). The span at 241-268 (KIKEPENYGKTGKSDKQRDKMPATEMPK) shows a compositional bias: basic and acidic residues. The segment covering 272–281 (PPSSTSSSGS) has biased composition (low complexity). Residues 290 to 298 (FSGRGFVLG) carry the SHP-box motif. The segment covering 302–311 (QIPTNKQIQS) has biased composition (polar residues). Residues 313-327 (PKAPPEPLHSPPDSP) are compositionally biased toward pro residues. Residues 341-374 (RLSSGTSNIPRKRSVGNTNAFINVNGSPVRISNG) are compositionally biased toward polar residues. Low complexity predominate over residues 399–416 (GASAVGSSKSSTDASTAD). A PIP-box motif is present at residues 451–458 (ESNISKYF). Residues 473 to 608 (TFGSPQKSAI…VRDQQANNPP (136 aa)) form a disordered region. 2 stretches are compositionally biased toward polar residues: residues 492 to 523 (FGSNQRPDSTSSGIRNTGSPQRSHASATSGSS) and 545 to 554 (SPRTSGTTPS). Positions 535-566 (SNFPSPRNIGSPRTSGTTPSGAKKRSWEEHNS) match the Nuclear localization signal motif. Basic and acidic residues-rich tracts occupy residues 559–570 (RSWEEHNSERVF) and 584–593 (TDKKREEVRS). The UBZ4-type zinc finger occupies 612-636 (TVHCPVCHIRLPESTINDHLDSCLL). Positions 615, 618, 630, and 634 each coordinate Zn(2+).

This sequence belongs to the Spartan family. As to quaternary structure, homodimer. The cofactor is Zn(2+). Autocatalytically cleaved in response to double-stranded DNA-binding: autocatalytic cleavage takes place in trans and leads to inactivation.

It localises to the nucleus. The protein resides in the chromosome. Its activity is regulated as follows. DNA-binding activates the protease activity: single-stranded DNA-binding specifically activates ability to cleave covalent DNA-protein cross-links (DPCs). In contrast, double-stranded DNA-binding specifically activates autocatalytic cleavage, and subsequent inactivation. Functionally, DNA-dependent metalloendopeptidase that mediates the proteolytic cleavage of covalent DNA-protein cross-links (DPCs) during DNA synthesis, thereby playing a key role in maintaining genomic integrity. DPCs are highly toxic DNA lesions that interfere with essential chromatin transactions, such as replication and transcription, and which are induced by reactive agents, such as UV light or formaldehyde. Associates with the DNA replication machinery and specifically removes DPCs during DNA synthesis. Catalyzes proteolytic cleavage of the hmces DNA-protein cross-link following unfolding by the brip1/fancj helicase. Acts as a pleiotropic protease for DNA-binding proteins cross-linked with DNA, such as top1, top2a, histones H3 and H4. Mediates degradation of DPCs that are not ubiquitinated, while it is not able to degrade ubiquitinated DPCs. SPRTN activation requires polymerase collision with DPCs followed by helicase bypass of DPCs. May also act as a 'reader' of ubiquitinated pcna: facilitates chromatin association of rad18 and is required for efficient pcna monoubiquitination, promoting a feed-forward loop to enhance pcna ubiquitination and translesion DNA synthesis. Acts as a regulator of translesion DNA synthesis by recruiting vcp/p97 to sites of DNA damage. The protein is DNA-dependent metalloprotease SPRTN of Danio rerio (Zebrafish).